Consider the following 305-residue polypeptide: MASNRQRSLRGPSHPSHMEEPFLQMVQASESLPPSQTWAQREFFLPSESWEFPGFTRQAYHQLALKLPPCTDMKSKVRQRLIHPWKGGAQHTWGFHTWLDVCRLPATFPTQPDRPYDSNVWRWLTDSNAHRCPPTEHPIPPPSWMGQNSFLTFIHCYPTFVDMKRKKQVIFRTVKELKEVEKLKLRSEARAPPLDAQGNIQPPASFKKYRHISAGGRFEPQGLQLMPNPFPNNFARSWPCPNPLPHYQEKVLKLALLPSAPLSQDLIRDFQTLIKDRTALPLHHLSKAQASKSPARKRKRRPGHF.

Residues 284–305 (HLSKAQASKSPARKRKRRPGHF) are disordered. Positions 294–305 (PARKRKRRPGHF) are enriched in basic residues.

Expressed in Testis.

The polypeptide is Testis-expressed protein 52 (Homo sapiens (Human)).